A 475-amino-acid polypeptide reads, in one-letter code: ESX-3 secretion system protein EccD3 (475 aa).

11 consecutive transmembrane segments (helical) span residues 132 to 152 (IARG…GLSV), 161 to 181 (LLGQ…ALAV), 186 to 206 (AVLA…AFAL), 212 to 232 (FGAP…LISM), 241 to 261 (IAVF…AGAA), 264 to 284 (WVIS…IVTV), 333 to 353 (GVIA…VSSA), 354 to 374 (NASP…ALRA), 384 to 404 (AWLL…FVIG), 409 to 429 (AALW…VAAL), and 453 to 473 (GLDA…SLVL).

It belongs to the EccD/Snm4 family. As to quaternary structure, part of the ESX-3 / type VII secretion system (T7SS), which is composed of cytosolic and membrane components. The ESX-3 membrane complex is composed of EccB3, EccC3, EccD3 and EccE3.

It is found in the cell inner membrane. Its function is as follows. Part of the ESX-3 specialized secretion system, which is required for siderophore-mediated iron acquisition and for the secretion of EsxH and EsxG. The chain is ESX-3 secretion system protein EccD3 from Mycolicibacterium smegmatis (strain ATCC 700084 / mc(2)155) (Mycobacterium smegmatis).